The following is a 211-amino-acid chain: Thymidylate kinase (211 aa).

10–17 (GGDGVGKS) serves as a coordination point for ATP.

The protein belongs to the thymidylate kinase family.

It carries out the reaction dTMP + ATP = dTDP + ADP. Functionally, phosphorylation of dTMP to form dTDP in both de novo and salvage pathways of dTTP synthesis. The sequence is that of Thymidylate kinase from Clavibacter michiganensis subsp. michiganensis (strain NCPPB 382).